Here is a 225-residue protein sequence, read N- to C-terminus: Protein-L-isoaspartate O-methyltransferase (225 aa).

Serine 75 is an active-site residue.

It belongs to the methyltransferase superfamily. L-isoaspartyl/D-aspartyl protein methyltransferase family.

The protein resides in the cytoplasm. It carries out the reaction [protein]-L-isoaspartate + S-adenosyl-L-methionine = [protein]-L-isoaspartate alpha-methyl ester + S-adenosyl-L-homocysteine. In terms of biological role, catalyzes the methyl esterification of L-isoaspartyl residues in peptides and proteins that result from spontaneous decomposition of normal L-aspartyl and L-asparaginyl residues. It plays a role in the repair and/or degradation of damaged proteins. The protein is Protein-L-isoaspartate O-methyltransferase of Xanthomonas axonopodis pv. citri (strain 306).